The chain runs to 105 residues: Large ribosomal subunit protein bL21c (105 aa).

The protein belongs to the bacterial ribosomal protein bL21 family. In terms of assembly, part of the 50S ribosomal subunit.

The protein localises to the plastid. Its subcellular location is the chloroplast. In terms of biological role, this protein binds to 23S rRNA. The sequence is that of Large ribosomal subunit protein bL21c from Thalassiosira pseudonana (Marine diatom).